Reading from the N-terminus, the 179-residue chain is ATP synthase subunit delta 1 (179 aa).

It belongs to the ATPase delta chain family. F-type ATPases have 2 components, F(1) - the catalytic core - and F(0) - the membrane proton channel. F(1) has five subunits: alpha(3), beta(3), gamma(1), delta(1), epsilon(1). F(0) has three main subunits: a(1), b(2) and c(10-14). The alpha and beta chains form an alternating ring which encloses part of the gamma chain. F(1) is attached to F(0) by a central stalk formed by the gamma and epsilon chains, while a peripheral stalk is formed by the delta and b chains.

It localises to the cell inner membrane. Functionally, f(1)F(0) ATP synthase produces ATP from ADP in the presence of a proton or sodium gradient. F-type ATPases consist of two structural domains, F(1) containing the extramembraneous catalytic core and F(0) containing the membrane proton channel, linked together by a central stalk and a peripheral stalk. During catalysis, ATP synthesis in the catalytic domain of F(1) is coupled via a rotary mechanism of the central stalk subunits to proton translocation. Its function is as follows. This protein is part of the stalk that links CF(0) to CF(1). It either transmits conformational changes from CF(0) to CF(1) or is implicated in proton conduction. This chain is ATP synthase subunit delta 1, found in Syntrophotalea carbinolica (strain DSM 2380 / NBRC 103641 / GraBd1) (Pelobacter carbinolicus).